The chain runs to 324 residues: tRNA (cytidine(32)/guanosine(34)-2'-O)-methyltransferase (324 aa).

The S-adenosyl-L-methionine site is built by Gly-53, Trp-55, Asp-75, Asp-91, and Asp-116. Lys-156 acts as the Proton acceptor in catalysis. The interval 221–240 (DFNQLDGPTRVIVPFVACGD) is required for binding to WDR6.

Belongs to the class I-like SAM-binding methyltransferase superfamily. RNA methyltransferase RlmE family. TRM7 subfamily. In terms of assembly, interacts with WDR6; the interaction is direct, and required for 2'-O-methylation of position 34 in substrate tRNAs.

The protein resides in the cytoplasm. It localises to the nucleus. The catalysed reaction is cytidine(32)/guanosine(34) in tRNA + 2 S-adenosyl-L-methionine = 2'-O-methylcytidine(32)/2'-O-methylguanosine(34) in tRNA + 2 S-adenosyl-L-homocysteine + 2 H(+). Methylates the 2'-O-ribose of nucleotides at positions 32 and 34 of the tRNA anticodon loop of substrate tRNAs. Requisite for faithful cytoplasmic translation. Requires THADA for methylation of the cytidine at position 32 of the anticodon loop of substrate tRNAs. Requires WDR6 for methylation of the nucleotide at position 34 of the anticodon loop of substrate tRNAs. Promotes translation efficiency of the UUU codon. Plays a role in neurogenesis. Required for expression of genes involved in neurogenesis and mitochondrial translation and energy generation. Requisite for RNA-mediated gene silencing. May modify position 32 in tRNA(Arg(ACG)), tRNA(Gln(CUG)), tRNA(Leu(UAA)), tRNA(Leu(UAG)), tRNA(Leu(AAG)), tRNA(Leu(CAG)), tRNA(Phe(GAA)), tRNA(Trp(CCA)) and tRNA(Val(AAC)), and position 34 in tRNA(Phe(GAA)), tRNA(Leu(CAA)), tRNA(Leu(UAA)), tRNA(Sec(UCA)), and tRNA(Trp(CCA)). The polypeptide is tRNA (cytidine(32)/guanosine(34)-2'-O)-methyltransferase (Mus musculus (Mouse)).